Reading from the N-terminus, the 351-residue chain is Basic salivary proline-rich protein 3 (351 aa).

The first 16 residues, 1-16 (MLLILLSVALLALSSA), serve as a signal peptide directing secretion. Residue Gln17 is modified to Pyrrolidone carboxylic acid. The segment at 17–351 (QSLNEDVSQE…HRPPQGQPPQ (335 aa)) is disordered. Residues 20 to 31 (NEDVSQEESPSV) are compositionally biased toward polar residues. Position 24 is a phosphoserine (Ser24). A run of 12 repeats spans residues 53 to 73 (PPGK…GPPP), 74 to 94 (RPGK…GPPP), 95 to 115 (RPGK…GPPP), 116 to 136 (RPGK…GPPP), 137 to 157 (RPGK…GPPP), 158 to 178 (RPGK…GPPP), 179 to 199 (HPGK…GPPP), 200 to 220 (RPGK…GPPP), 221 to 241 (RPGK…GPPP), 242 to 261 (RPGK…QGPP), 263 to 283 (RPGK…GPPP), and 284 to 304 (HPGK…RPPP). A 12 X 21 AA tandem repeats of [RHP]-P-G-K-P-[EQ]-G-[PQS]-P-[PS]-Q-[GE]-G-N-[QK]-[SP]-[QR]-[GR]-P-P-P region spans residues 53–304 (PPGKPEGRPP…EGNKPQRPPP (252 aa)). The N-linked (GlcNAc...) asparagine glycan is linked to Asn66. Residues 70 to 84 (GPPPRPGKPEGPPPQ) are compositionally biased toward pro residues. N-linked (GlcNAc...) asparagine glycosylation occurs at Asn87. Ser89 is a glycosylation site (O-linked (Hex) serine). Over residues 99 to 111 (PEGQPPQGGNQSQ) the composition is skewed to low complexity. Asn108 is a glycosylation site (N-linked (GlcNAc...) asparagine). Positions 112-126 (GPPPRPGKPEGPPPQ) are enriched in pro residues. N-linked (GlcNAc...) asparagine glycosylation occurs at Asn129. Residues 133–147 (GPPPRPGKPEGPPPQ) show a composition bias toward pro residues. An N-linked (GlcNAc...) asparagine glycan is attached at Asn150. Pro residues-rich tracts occupy residues 154-168 (GPPP…PPPQ) and 175-189 (GPPP…PPPQ). The N-linked (GlcNAc...) asparagine glycan is linked to Asn192. The segment covering 196 to 210 (GPPPRPGKPEGPPPQ) has biased composition (pro residues). N-linked (GlcNAc...) asparagine glycans are attached at residues Asn213 and Asn234. 3 stretches are compositionally biased toward pro residues: residues 217 to 252 (GPPP…PPPQ), 259 to 270 (GPPPRPGKPEGP), and 279 to 351 (QGPP…QPPQ). An N-linked (Hex) asparagine; atypical glycan is attached at Asn297.

N- and O-glycosylated; contains about 50% carbohydrate. This is composed of highly fucosylated N-linked saccharides, the major structure is a biantennary asialosaccharide containing 2 fucose residues on one antenna and an unsubstituted terminal lactosamine sequence on the other. The Gram-negative bacterium F.nucleatum binds to carbohydrates containing unsubstituted GalBeta1,4GlcNAc residues. N-glycosylation on Asn-87 is prevalent in head and neck cancer patients. In terms of processing, proteolytically cleaved at the tripeptide Xaa-Pro-Gln, where Xaa in the P(3) position is mostly lysine. The endoprotease may be of microbial origin. Besides on the N-terminal of mature PRB3, pyroglutamate formation found on at least Gln-67, Gln-88, Gln-256 and Gln-337.

The protein localises to the secreted. In terms of biological role, acts as a receptor for the Gram-negative bacterium F.nucleatum. This is Basic salivary proline-rich protein 3 (PRB3) from Homo sapiens (Human).